A 513-amino-acid chain; its full sequence is TRAF3-interacting JNK-activating modulator (513 aa).

Disordered regions lie at residues 1–96, 130–171, and 381–402; these read MISS…GQVS, SSGI…KAEE, and SLQG…QLKK. Residues 1 to 485 lie on the Cytoplasmic side of the membrane; the sequence is MISSDSRSSP…QLQVKENELQ (485 aa). Basic and acidic residues-rich tracts occupy residues 17–31 and 69–79; these read ESYE…ETRE and RNLEEEKKGQA. A coiled-coil region spans residues 266-488; that stretch reads MKKVLLEMED…VKENELQCGQ (223 aa). Positions 386 to 397 are enriched in polar residues; sequence GEQQSSETQDLQ. A helical; Anchor for type IV membrane protein transmembrane segment spans residues 486–506; that stretch reads CGQWLPVLMVVIATALAVFLA. Residues 507 to 513 lie on the Extracellular side of the membrane; it reads NKGNLVI.

As to quaternary structure, interacts (via its coiled-coil domain) with TRAF3 (via isoleucine zipper). Interacts with MAP2K1. Interacts with PPP2CA; this interaction targets PPP2CA to the lysosomes. Interacts with MAVS. Interacts with TBK1. Expressed in bone marrow, spleen and thymus. Not detected in heart, kidney and liver.

It is found in the cell membrane. The protein resides in the golgi apparatus membrane. Its subcellular location is the lysosome membrane. It localises to the mitochondrion outer membrane. Its function is as follows. Adapter protein that plays essential roles in both innate and adaptive immunity. Plays a crucial role in the regulation of thymocyte development. Mechanistically, mediates TCR-stimulated activation through recruiting MAP2K1/MEK1 to the Golgi and, thereby, facilitating the interaction of MAP2K1/MEK1 with its activator BRAF. Also plays an essential role in regulatory T-cell stability and function by recruiting the serine-threonine phosphatase catalytic subunit (PPP2CA) to the lysosome, thereby facilitating the interaction of PP2Ac with the mTORC1 component RPTOR and restricting glycolytic metabolism. Positively regulates TLR4 signaling activity in macrophage-mediated inflammation by acting as a molecular clamp to facilitate LPS-induced translocation of TLR4 to lipid rafts. In response to viral infection, facilitates the recruitment of TRAF3 to MAVS within mitochondria leading to IRF3 activation and interferon production. However, participates in the maintenance of immune homeostasis and the prevention of overzealous innate immunity by promoting 'Lys-48'-dependent ubiquitination of TBK1. In Mus musculus (Mouse), this protein is TRAF3-interacting JNK-activating modulator (Traf3ip3).